The following is a 540-amino-acid chain: Phosphoenolpyruvate carboxykinase (ATP) (540 aa).

Residue R65 coordinates substrate. K87 carries the post-translational modification N6-acetyllysine. Positions 207 and 213 each coordinate substrate. ATP-binding positions include K213, H232, and G248–T256. Mn(2+) contacts are provided by K213 and H232. Position 269 (D269) interacts with Mn(2+). ATP-binding positions include E297, R333, R449–I450, and T455. A substrate-binding site is contributed by R333. Position 523 is an N6-acetyllysine (K523).

This sequence belongs to the phosphoenolpyruvate carboxykinase (ATP) family. Monomer. Mn(2+) is required as a cofactor.

The protein resides in the cytoplasm. The catalysed reaction is oxaloacetate + ATP = phosphoenolpyruvate + ADP + CO2. Its pathway is carbohydrate biosynthesis; gluconeogenesis. In terms of biological role, involved in the gluconeogenesis. Catalyzes the conversion of oxaloacetate (OAA) to phosphoenolpyruvate (PEP) through direct phosphoryl transfer between the nucleoside triphosphate and OAA. The polypeptide is Phosphoenolpyruvate carboxykinase (ATP) (Shigella flexneri serotype 5b (strain 8401)).